The following is a 756-amino-acid chain: Zinc finger and BTB domain-containing protein 49 (756 aa).

The region spanning 25–91 is the BTB domain; that stretch reads CDCMLVVRGV…MYTSRLDLNQ (67 aa). 3 disordered regions span residues 176-197, 226-290, and 311-379; these read APSA…GGSC, PSQV…LSEP, and SQQS…PSQA. Over residues 226-242 the composition is skewed to polar residues; sequence PSQVPATQQPLTRSAST. Composition is skewed to basic and acidic residues over residues 319 to 341 and 348 to 365; these read SHPE…DAVE and AEEK…REEE. 7 consecutive C2H2-type zinc fingers follow at residues 386-408, 414-436, 442-464, 470-492, 498-520, 526-548, and 554-576; these read YACE…KRSH, FECN…LRRH, YICE…IIIH, HLCD…KKTH, FTCD…RVRH, YSCP…VRTH, and YSCE…KRMH.

This sequence belongs to the krueppel C2H2-type zinc-finger protein family. Interacts with EP300, KAT5/Tip60 and ZBTB17. The interaction with EP300 is direct and leads to synergistic induction of CDKN1A. On the CDKN1A promoter, forms a complex with ZBTB17; this interaction leads to additive CDKN1A transactivation. The interaction with ZBTB17 may block ZBTB17 repressor activity. As to expression, widely expressed, with highest levels in white adipose tissue and kidney, intermediate levels in brain, liver and heart, and lowest levels in spleen, brown adipose tissue and muscle.

It is found in the cytoplasm. Its subcellular location is the nucleus. In terms of biological role, transcription factor. Inhibits cell proliferation by activating either CDKN1A/p21 transcription or RB1 transcription. In Mus musculus (Mouse), this protein is Zinc finger and BTB domain-containing protein 49 (Zbtb49).